A 973-amino-acid chain; its full sequence is Piwi-like protein 2 (973 aa).

The tract at residues W28–Q65 is disordered. Residues P34–G48 show a composition bias toward low complexity. R47 is subject to Symmetric dimethylarginine. 2 positions are modified to omega-N-methylarginine; by PRMT5; alternate: R76 and R97. Position 76 is a symmetric dimethylarginine; by PRMT5; alternate (R76). At R97 the chain carries Symmetric dimethylarginine; alternate. R102 carries the post-translational modification Symmetric dimethylarginine; by PRMT5; alternate. Position 102 is an omega-N-methylarginine; alternate (R102). 2 positions are modified to symmetric dimethylarginine: R146 and R158. Residues G162–D199 form a disordered region. R165 carries the symmetric dimethylarginine; by PRMT5 modification. Positions C389–G502 constitute a PAZ domain. R551 bears the Symmetric dimethylarginine; by PRMT5 mark. Residues M668 to H959 form the Piwi domain. Residues D745, E783, D815, and H948 contribute to the active site.

It belongs to the argonaute family. Piwi subfamily. As to quaternary structure, interacts with DDX4, MAEL, EIF3A, EIF4E, EIF4G, PRMT5 and WDR77. Associates with EIF4E- and EIF4G-containing m7G cap-binding complexes. Interacts (when methylated on arginine residues) with TDRD1 and TDRKH/TDRD2. Interacts with TDRD12. Component of the PET complex, at least composed of EXD1, PIWIL2, TDRD12 and piRNAs. Interacts with MOV10L1. Interacts with GPAT2. Interacts with TEX19. Interacts with GSK3B. Interacts (via PIWI domain) with BMAL1 and CLOCK. Interacts with TEX15. Mg(2+) is required as a cofactor. Post-translationally, arginine methylation by PRMT5 is required for the interaction with Tudor domain-containing protein TDRD1 and subsequent localization to the meiotic nuage, also named P granule. As to expression, expressed in adult testis and in most tumors.

It is found in the cytoplasm. Endoribonuclease that plays a central role during spermatogenesis by repressing transposable elements and preventing their mobilization, which is essential for the germline integrity. Plays an essential role in meiotic differentiation of spermatocytes, germ cell differentiation and in self-renewal of spermatogonial stem cells. Acts via the piRNA metabolic process, which mediates the repression of transposable elements during meiosis by forming complexes composed of piRNAs and Piwi proteins and govern the methylation and subsequent repression of transposons. During piRNA biosynthesis, plays a key role in the piRNA amplification loop, also named ping-pong amplification cycle, by acting as a 'slicer-competent' piRNA endoribonuclease that cleaves primary piRNAs, which are then loaded onto 'slicer-incompetent' PIWIL4. PIWIL2 slicing produces a pre-miRNA intermediate, which is then processed in mature piRNAs, and as well as a 16 nucleotide by-product that is degraded. Required for PIWIL4/MIWI2 nuclear localization and association with secondary piRNAs antisense. Besides their function in transposable elements repression, piRNAs are probably involved in other processes during meiosis such as translation regulation. Indirectly modulates expression of genes such as PDGFRB, SLC2A1, ITGA6, GJA7, THY1, CD9 and STRA8. When overexpressed, acts as an oncogene by inhibition of apoptosis and promotion of proliferation in tumors. Represses circadian rhythms by promoting the stability and activity of core clock components BMAL1 and CLOCK by inhibiting GSK3B-mediated phosphorylation and ubiquitination-dependent degradation of these proteins. The sequence is that of Piwi-like protein 2 (PIWIL2) from Homo sapiens (Human).